The chain runs to 1057 residues: Probable sucrose-phosphate synthase 1 (1057 aa).

A compositionally biased stretch (basic and acidic residues) spans 103–115; it reads RRLERERGRREAT. 3 disordered regions span residues 103-143, 439-459, and 670-693; these read RRLE…STRS, PQDGDMDGETEGNEDNPASPD, and RHPQWQRTDDGGETSESDSPGDSL. Positions 442 to 452 are enriched in acidic residues; it reads GDMDGETEGNE.

It belongs to the glycosyltransferase 1 family. Homodimer or homotetramer.

The catalysed reaction is beta-D-fructose 6-phosphate + UDP-alpha-D-glucose = sucrose 6(F)-phosphate + UDP + H(+). It functions in the pathway glycan biosynthesis; sucrose biosynthesis; sucrose from D-fructose 6-phosphate and UDP-alpha-D-glucose: step 1/2. Its activity is regulated as follows. Activity is regulated by phosphorylation and moderated by concentration of metabolites and light. Plays a role in photosynthetic sucrose synthesis by catalyzing the rate-limiting step of sucrose biosynthesis from UDP-glucose and fructose- 6-phosphate. Involved in the regulation of carbon partitioning in the leaves of plants. May regulate the synthesis of sucrose and therefore play a major role as a limiting factor in the export of photoassimilates out of the leaf. Plays a role for sucrose availability that is essential for plant growth and fiber elongation. This is Probable sucrose-phosphate synthase 1 (SPS1) from Citrus unshiu (Satsuma mandarin).